Reading from the N-terminus, the 449-residue chain is Tol-Pal system protein TolB (449 aa).

The signal sequence occupies residues 1 to 36 (MDCPNMPLHINRRQMLLSAATAAGALALGPARDAFG).

The protein belongs to the TolB family. In terms of assembly, the Tol-Pal system is composed of five core proteins: the inner membrane proteins TolA, TolQ and TolR, the periplasmic protein TolB and the outer membrane protein Pal. They form a network linking the inner and outer membranes and the peptidoglycan layer.

Its subcellular location is the periplasm. In terms of biological role, part of the Tol-Pal system, which plays a role in outer membrane invagination during cell division and is important for maintaining outer membrane integrity. In Rhodopseudomonas palustris (strain HaA2), this protein is Tol-Pal system protein TolB.